A 506-amino-acid polypeptide reads, in one-letter code: Dolabradiene monooxygenase (506 aa).

Residues valine 5–leucine 25 form a helical membrane-spanning segment. Cysteine 443 lines the heme pocket.

Belongs to the cytochrome P450 family. Heme serves as cofactor.

It localises to the membrane. The catalysed reaction is dolabradiene + reduced [NADPH--hemoprotein reductase] + O2 = 15,16-epoxydolabrene + oxidized [NADPH--hemoprotein reductase] + H2O + H(+). It catalyses the reaction 15,16-epoxydolabrene + reduced [NADPH--hemoprotein reductase] + O2 = 3beta-hydroxy-15,16-epoxydolabrene + oxidized [NADPH--hemoprotein reductase] + H2O + H(+). In terms of biological role, involved in the production of antifungal dolabralexin phytoalexins in response to biotic and abiotic stresses. Catalyzes the epoxidation of dolabradiene at C-16, followed by hydroxylation at C-3, to yield the epoxides 15,16-epoxydolabrene (epoxydolabrene) and 3b-hydroxy-15,16-epoxydolabrene (epoxydolabranol). This Zea mays (Maize) protein is Dolabradiene monooxygenase.